We begin with the raw amino-acid sequence, 153 residues long: uncharacterized protein (153 aa).

An N-terminal signal peptide occupies residues 1–18 (MSARISKQLRLSVPPCLA). N19 and N25 each carry an N-linked (GlcNAc...) asparagine glycan. The Extracellular segment spans residues 19–43 (NRTTASNSSSCVTEVEPLLQSFSST). A helical membrane pass occupies residues 44–64 (LVLIVLATVIFCLVVLSLSTF). Residues 65-153 (HMHKSKMKKR…EHLQQSVVLS (89 aa)) lie on the Cytoplasmic side of the membrane. Residues 75-115 (KIEKAQEEYERDHCSPKAERGHLHGMGRGGTHGSPTSPTIQ) are disordered. Positions 77–96 (EKAQEEYERDHCSPKAERGH) are enriched in basic and acidic residues.

Its subcellular location is the membrane. This is an uncharacterized protein from Xenopus tropicalis (Western clawed frog).